The primary structure comprises 470 residues: Metalloreductase STEAP4 (470 aa).

NADP(+) contacts are provided by residues 27-30, 49-50, Tyr67, 81-85, Asn106, and Ala139; these read TGDF, SR, and MHREH. Residues Trp140 and Asp148 each coordinate FAD. NADP(+) is bound at residue Arg171. The next 2 helical transmembrane spans lie at 202–224 and 236–256; these read FPFY…REVI and YRLA…ILLA. Fe(3+) is bound at residue Tyr217. The Ferric oxidoreductase domain maps to 247-395; it reads FPITALILLA…LGYLTLVLCT (149 aa). Residues Gln269 and Arg290 each coordinate FAD. The next 2 membrane-spanning stretches (helical) occupy residues 293-313 and 342-362; these read LGLV…VIPI and AWIN…FLLL. Residue His304 participates in heme b binding. Tyr307 contributes to the Fe(3+) binding site. Residues Ser366 and Gln383 each contribute to the FAD site. 2 helical membrane-spanning segments follow: residues 381–401 and 419–439; these read FVQS…TLVY and AYIL…ILIM. His397 contacts heme b.

This sequence belongs to the STEAP family. Homotrimer. Interacts with PTK2/FAK1; the interaction may regulate PTK2 phosphorylation. FAD serves as cofactor. It depends on heme b as a cofactor. Expressed in white and brown adipose tissues cells, as well as in muscle and liver cells. Detected in joints and spleens of arthritic mice.

It is found in the cell membrane. The protein resides in the golgi apparatus membrane. The protein localises to the early endosome membrane. It catalyses the reaction 2 Fe(2+) + NADP(+) + H(+) = 2 Fe(3+) + NADPH. The catalysed reaction is 2 Cu(+) + NADP(+) + H(+) = 2 Cu(2+) + NADPH. In terms of biological role, integral membrane protein that functions as a NADPH-dependent ferric-chelate reductase, using NADPH from one side of the membrane to reduce a Fe(3+) chelate that is bound on the other side of the membrane. Mediates sequential transmembrane electron transfer from NADPH to FAD and onto heme, and finally to the Fe(3+) chelate. Can also reduce Cu(2+) to Cu(1+). Plays a role in systemic metabolic homeostasis, integrating inflammatory and metabolic responses. Associated with obesity and insulin-resistance. Involved in inflammatory arthritis, through the regulation of inflammatory cytokines. Inhibits anchorage-independent cell proliferation. This Mus musculus (Mouse) protein is Metalloreductase STEAP4 (Steap4).